A 155-amino-acid polypeptide reads, in one-letter code: Peptide methionine sulfoxide reductase MsrB (155 aa).

The region spanning 15–137 is the MsrB domain; the sequence is REALIATLNA…NSVSLTFIPT (123 aa). Zn(2+) is bound by residues Cys54, Cys57, Cys103, and Cys106. Catalysis depends on Cys126, which acts as the Nucleophile.

Belongs to the MsrB Met sulfoxide reductase family. Zn(2+) is required as a cofactor.

It carries out the reaction L-methionyl-[protein] + [thioredoxin]-disulfide + H2O = L-methionyl-(R)-S-oxide-[protein] + [thioredoxin]-dithiol. In Xylella fastidiosa (strain 9a5c), this protein is Peptide methionine sulfoxide reductase MsrB.